A 265-amino-acid chain; its full sequence is Mlc titration factor A (265 aa).

The Zn(2+) site is built by His111, His148, His152, and Glu211.

The protein belongs to the MtfA family. Interacts with Mlc. Zn(2+) is required as a cofactor.

Its subcellular location is the cytoplasm. Functionally, involved in the modulation of the activity of the glucose-phosphotransferase system (glucose-PTS). Interacts with the transcriptional repressor Mlc, preventing its interaction with DNA and leading to the modulation of expression of genes regulated by Mlc, including ptsG, which encodes the PTS system glucose-specific EIICB component. Shows zinc-dependent metallopeptidase activity. The sequence is that of Mlc titration factor A from Pectobacterium atrosepticum (strain SCRI 1043 / ATCC BAA-672) (Erwinia carotovora subsp. atroseptica).